Reading from the N-terminus, the 698-residue chain is Ion-translocating oxidoreductase complex subunit C (698 aa).

4Fe-4S ferredoxin-type domains are found at residues 366 to 397 and 407 to 436; these read TEMGLSEPEQSCIRCGLCVDACPAGLLPQQLY and KARNHNLFDCIECGACAYVCPSNIPLVQYY. The [4Fe-4S] cluster site is built by Cys377, Cys380, Cys383, Cys387, Cys416, Cys419, Cys422, and Cys426.

It belongs to the 4Fe4S bacterial-type ferredoxin family. RnfC subfamily. The complex is composed of six subunits: RnfA, RnfB, RnfC, RnfD, RnfE and RnfG. [4Fe-4S] cluster serves as cofactor.

Its subcellular location is the cell inner membrane. Part of a membrane-bound complex that couples electron transfer with translocation of ions across the membrane. The polypeptide is Ion-translocating oxidoreductase complex subunit C (Yersinia pseudotuberculosis serotype O:1b (strain IP 31758)).